The chain runs to 342 residues: Ferrochelatase (342 aa).

Fe cation is bound by residues His-188 and Glu-268.

The protein belongs to the ferrochelatase family.

It localises to the cytoplasm. The catalysed reaction is heme b + 2 H(+) = protoporphyrin IX + Fe(2+). The protein operates within porphyrin-containing compound metabolism; protoheme biosynthesis; protoheme from protoporphyrin-IX: step 1/1. Its function is as follows. Catalyzes the ferrous insertion into protoporphyrin IX. The polypeptide is Ferrochelatase (Rickettsia prowazekii (strain Madrid E)).